We begin with the raw amino-acid sequence, 420 residues long: UDP-N-acetylglucosamine 1-carboxyvinyltransferase (420 aa).

A phosphoenolpyruvate-binding site is contributed by 22 to 23 (KN). Position 92 (R92) interacts with UDP-N-acetyl-alpha-D-glucosamine. The Proton donor role is filled by C116. C116 carries the post-translational modification 2-(S-cysteinyl)pyruvic acid O-phosphothioketal. UDP-N-acetyl-alpha-D-glucosamine contacts are provided by residues 121-125 (RPVDL), 161-164 (KVSV), D306, and I328.

This sequence belongs to the EPSP synthase family. MurA subfamily.

It localises to the cytoplasm. The enzyme catalyses phosphoenolpyruvate + UDP-N-acetyl-alpha-D-glucosamine = UDP-N-acetyl-3-O-(1-carboxyvinyl)-alpha-D-glucosamine + phosphate. Its pathway is cell wall biogenesis; peptidoglycan biosynthesis. Cell wall formation. Adds enolpyruvyl to UDP-N-acetylglucosamine. The sequence is that of UDP-N-acetylglucosamine 1-carboxyvinyltransferase from Yersinia pseudotuberculosis serotype O:1b (strain IP 31758).